A 1030-amino-acid polypeptide reads, in one-letter code: LPS-assembly protein LptD (1030 aa).

The N-terminal stretch at 1–32 is a signal peptide; the sequence is MEGPPTAAHAAAPLRTAVFLALAASWQQPAVA. Positions 50–213 are disordered; sequence VAKRKDGGAD…APAGWTCKPQ (164 aa). Residues 78-91 show a composition bias toward polar residues; it reads LSQSNRAAPSTAVS. The segment covering 126–137 has biased composition (acidic residues); the sequence is TEDEEDEESESA. The span at 161–171 shows a compositional bias: pro residues; that stretch reads GTPPARAPRPE.

It belongs to the LptD family. Component of the lipopolysaccharide transport and assembly complex. Interacts with LptE and LptA.

The protein resides in the cell outer membrane. In terms of biological role, together with LptE, is involved in the assembly of lipopolysaccharide (LPS) at the surface of the outer membrane. The sequence is that of LPS-assembly protein LptD from Methylococcus capsulatus (strain ATCC 33009 / NCIMB 11132 / Bath).